The primary structure comprises 714 residues: Probable serine/threonine-protein kinase At1g09600 (714 aa).

A disordered region spans residues 1-64; it reads MGCNCTKGTR…NVGFEERSND (64 aa). A lipid anchor (N-myristoyl glycine) is attached at Gly-2. Positions 16–27 are enriched in low complexity; sequence VDNSNSIVSNVN. The segment covering 31-46 has biased composition (basic residues); it reads RRSKPKKTPKKKKKSK. The 285-residue stretch at 163–447 folds into the Protein kinase domain; the sequence is FEKLEKIGQG…TASALESEFF (285 aa). Residues 169 to 177 and Lys-192 each bind ATP; that span reads IGQGTYSSV. Asp-287 acts as the Proton acceptor in catalysis. The segment covering 471 to 498 has biased composition (basic and acidic residues); that stretch reads KAQEEEAKRKKDTSSKQNDSKQVSRESK. Disordered stretches follow at residues 471–579 and 693–714; these read KAQE…RKEL and VDKKTNRGDNRQTQAFLAANGR. Polar residues-rich tracts occupy residues 506–528 and 556–573; these read NAESLTSIQKRQGQHNQVSNSDK and GVSSVNRNGENVMMGSSR.

It belongs to the protein kinase superfamily. Ser/Thr protein kinase family.

This is Probable serine/threonine-protein kinase At1g09600 from Arabidopsis thaliana (Mouse-ear cress).